Reading from the N-terminus, the 291-residue chain is Lipoyl synthase (291 aa).

Positions 36, 41, 47, 62, 66, 69, and 275 each coordinate [4Fe-4S] cluster. A Radical SAM core domain is found at Phe48–Lys264.

Belongs to the radical SAM superfamily. Lipoyl synthase family. The cofactor is [4Fe-4S] cluster.

Its subcellular location is the cytoplasm. The catalysed reaction is [[Fe-S] cluster scaffold protein carrying a second [4Fe-4S](2+) cluster] + N(6)-octanoyl-L-lysyl-[protein] + 2 oxidized [2Fe-2S]-[ferredoxin] + 2 S-adenosyl-L-methionine + 4 H(+) = [[Fe-S] cluster scaffold protein] + N(6)-[(R)-dihydrolipoyl]-L-lysyl-[protein] + 4 Fe(3+) + 2 hydrogen sulfide + 2 5'-deoxyadenosine + 2 L-methionine + 2 reduced [2Fe-2S]-[ferredoxin]. It functions in the pathway protein modification; protein lipoylation via endogenous pathway; protein N(6)-(lipoyl)lysine from octanoyl-[acyl-carrier-protein]: step 2/2. Catalyzes the radical-mediated insertion of two sulfur atoms into the C-6 and C-8 positions of the octanoyl moiety bound to the lipoyl domains of lipoate-dependent enzymes, thereby converting the octanoylated domains into lipoylated derivatives. This chain is Lipoyl synthase, found in Caldicellulosiruptor bescii (strain ATCC BAA-1888 / DSM 6725 / KCTC 15123 / Z-1320) (Anaerocellum thermophilum).